The sequence spans 491 residues: Ketol-acid reductoisomerase (NADP(+)) (491 aa).

A KARI N-terminal Rossmann domain is found at 15–208 (AQLGKCRFMG…GGHRAGVLES (194 aa)). Residues 45-48 (CGAQ), arginine 68, arginine 76, serine 78, and 108-110 (DKQ) each bind NADP(+). The active site involves histidine 132. Position 158 (glycine 158) interacts with NADP(+). KARI C-terminal knotted domains follow at residues 209 to 344 (SFVA…TAPQ) and 345 to 484 (YEGK…MTDM). Positions 217, 221, 389, and 393 each coordinate Mg(2+). Serine 414 contributes to the substrate binding site.

The protein belongs to the ketol-acid reductoisomerase family. Mg(2+) serves as cofactor.

The catalysed reaction is (2R)-2,3-dihydroxy-3-methylbutanoate + NADP(+) = (2S)-2-acetolactate + NADPH + H(+). It carries out the reaction (2R,3R)-2,3-dihydroxy-3-methylpentanoate + NADP(+) = (S)-2-ethyl-2-hydroxy-3-oxobutanoate + NADPH + H(+). It participates in amino-acid biosynthesis; L-isoleucine biosynthesis; L-isoleucine from 2-oxobutanoate: step 2/4. Its pathway is amino-acid biosynthesis; L-valine biosynthesis; L-valine from pyruvate: step 2/4. Involved in the biosynthesis of branched-chain amino acids (BCAA). Catalyzes an alkyl-migration followed by a ketol-acid reduction of (S)-2-acetolactate (S2AL) to yield (R)-2,3-dihydroxy-isovalerate. In the isomerase reaction, S2AL is rearranged via a Mg-dependent methyl migration to produce 3-hydroxy-3-methyl-2-ketobutyrate (HMKB). In the reductase reaction, this 2-ketoacid undergoes a metal-dependent reduction by NADPH to yield (R)-2,3-dihydroxy-isovalerate. This is Ketol-acid reductoisomerase (NADP(+)) from Escherichia coli O7:K1 (strain IAI39 / ExPEC).